Here is a 155-residue protein sequence, read N- to C-terminus: 6,7-dimethyl-8-ribityllumazine synthase (155 aa).

Residues phenylalanine 23, alanine 57–glutamate 59, and alanine 81–isoleucine 83 contribute to the 5-amino-6-(D-ribitylamino)uracil site. Serine 86–threonine 87 provides a ligand contact to (2S)-2-hydroxy-3-oxobutyl phosphate. Residue histidine 89 is the Proton donor of the active site. Phenylalanine 114 serves as a coordination point for 5-amino-6-(D-ribitylamino)uracil. Position 128 (arginine 128) interacts with (2S)-2-hydroxy-3-oxobutyl phosphate.

This sequence belongs to the DMRL synthase family.

The enzyme catalyses (2S)-2-hydroxy-3-oxobutyl phosphate + 5-amino-6-(D-ribitylamino)uracil = 6,7-dimethyl-8-(1-D-ribityl)lumazine + phosphate + 2 H2O + H(+). It functions in the pathway cofactor biosynthesis; riboflavin biosynthesis; riboflavin from 2-hydroxy-3-oxobutyl phosphate and 5-amino-6-(D-ribitylamino)uracil: step 1/2. Its function is as follows. Catalyzes the formation of 6,7-dimethyl-8-ribityllumazine by condensation of 5-amino-6-(D-ribitylamino)uracil with 3,4-dihydroxy-2-butanone 4-phosphate. This is the penultimate step in the biosynthesis of riboflavin. In Geobacter sulfurreducens (strain ATCC 51573 / DSM 12127 / PCA), this protein is 6,7-dimethyl-8-ribityllumazine synthase.